The following is a 238-amino-acid chain: Protein odd-skipped-related 2 (238 aa).

Positions 105-126 are disordered; sequence EDPPVTGQSRLSPERRPARGRL. C2H2-type zinc fingers lie at residues 134 to 156, 162 to 184, and 190 to 212; these read FICR…ERTH, YTCD…RYIH, and FKCQ…KTLH.

Belongs to the Odd C2H2-type zinc-finger protein family. In terms of tissue distribution, at the 8-somite stage, expressed in the pronephros, with weak generalized expression elsewhere. At 24 hpf, expressed in the kidney tubules and the anterior duct, and also in the gut. At 60 hpf, expressed in the tubules and the pectoral fin buds.

Its subcellular location is the nucleus. In terms of biological role, transcriptional repressor. Required for pronephric kidney development. This is Protein odd-skipped-related 2 from Danio rerio (Zebrafish).